A 500-amino-acid polypeptide reads, in one-letter code: Probable cytosol aminopeptidase (500 aa).

Residues Lys261 and Asp266 each contribute to the Mn(2+) site. Residue Lys273 is part of the active site. Mn(2+)-binding residues include Asp284, Asp343, and Glu345. Arg347 is an active-site residue.

Belongs to the peptidase M17 family. The cofactor is Mn(2+).

It localises to the cytoplasm. The enzyme catalyses Release of an N-terminal amino acid, Xaa-|-Yaa-, in which Xaa is preferably Leu, but may be other amino acids including Pro although not Arg or Lys, and Yaa may be Pro. Amino acid amides and methyl esters are also readily hydrolyzed, but rates on arylamides are exceedingly low.. It catalyses the reaction Release of an N-terminal amino acid, preferentially leucine, but not glutamic or aspartic acids.. Its function is as follows. Presumably involved in the processing and regular turnover of intracellular proteins. Catalyzes the removal of unsubstituted N-terminal amino acids from various peptides. The chain is Probable cytosol aminopeptidase from Wolbachia pipientis wMel.